Consider the following 475-residue polypeptide: Ankyrin repeat, SAM and basic leucine zipper domain-containing protein 1 (475 aa).

The tract at residues 1-25 is disordered; that stretch reads MAAGALRGLPVAGGGESSESEDDGW. Residues Ser-17, Ser-18, and Ser-20 each carry the phosphoserine modification. ANK repeat units follow at residues 45-74, 78-107, 110-144, 148-177, 181-210, and 214-243; these read EKKE…SVDS, YGWT…NASF, DKQS…DPNV, RLMT…EVNT, NGYT…NKML, and DGKM…PLEG. Positions 272–334 constitute an SAM domain; sequence SYTAFGDLEV…KILAALKELQ (63 aa).

In terms of assembly, interacts with DDX4, PIWIL1, RANBP9 and TDRD1.

Its subcellular location is the cytoplasm. Its function is as follows. Plays a central role during spermatogenesis by repressing transposable elements and preventing their mobilization, which is essential for the germline integrity. Acts via the piRNA metabolic process, which mediates the repression of transposable elements during meiosis by forming complexes composed of piRNAs and Piwi proteins and governs the methylation and subsequent repression of transposons. Its association with pi-bodies suggests a participation in the primary piRNAs metabolic process. Required prior to the pachytene stage to facilitate the production of multiple types of piRNAs, including those associated with repeats involved in the regulation of retrotransposons. May act by mediating protein-protein interactions during germ cell maturation. The protein is Ankyrin repeat, SAM and basic leucine zipper domain-containing protein 1 (ASZ1) of Nomascus leucogenys (Northern white-cheeked gibbon).